A 394-amino-acid polypeptide reads, in one-letter code: ATP phosphoribosyltransferase regulatory subunit (394 aa).

Belongs to the class-II aminoacyl-tRNA synthetase family. HisZ subfamily. Heteromultimer composed of HisG and HisZ subunits.

It localises to the cytoplasm. It participates in amino-acid biosynthesis; L-histidine biosynthesis; L-histidine from 5-phospho-alpha-D-ribose 1-diphosphate: step 1/9. Required for the first step of histidine biosynthesis. May allow the feedback regulation of ATP phosphoribosyltransferase activity by histidine. In Pseudomonas paraeruginosa (strain DSM 24068 / PA7) (Pseudomonas aeruginosa (strain PA7)), this protein is ATP phosphoribosyltransferase regulatory subunit.